Reading from the N-terminus, the 589-residue chain is Poly(3-hydroxyalkanoate) polymerase subunit PhaC (589 aa).

Residues 1–23 form a disordered region; the sequence is MATGKGAAASTQEGKSQPFKVTP. Cys319 is a catalytic residue.

This sequence belongs to the PHA/PHB synthase family. Type I PhaC subfamily. Monomer.

It localises to the cytoplasm. The catalysed reaction is (3R)-3-hydroxybutanoyl-CoA + [(3R)-hydroxybutanoate](n) = [(3R)-hydroxybutanoate](n+1) + CoA. Its pathway is biopolymer metabolism; poly-(R)-3-hydroxybutanoate biosynthesis. In terms of biological role, polymerizes (R)-3-hydroxybutyryl-CoA to create polyhydroxybutyrate (PHB) which consists of thousands of hydroxybutyrate molecules linked end to end. PHB serves as an intracellular energy reserve material when cells grow under conditions of nutrient limitation. The polypeptide is Poly(3-hydroxyalkanoate) polymerase subunit PhaC (Cupriavidus necator (strain ATCC 17699 / DSM 428 / KCTC 22496 / NCIMB 10442 / H16 / Stanier 337) (Ralstonia eutropha)).